A 556-amino-acid chain; its full sequence is Formate--tetrahydrofolate ligase (556 aa).

65 to 72 is an ATP binding site; that stretch reads TPAGEGKS.

This sequence belongs to the formate--tetrahydrofolate ligase family.

The catalysed reaction is (6S)-5,6,7,8-tetrahydrofolate + formate + ATP = (6R)-10-formyltetrahydrofolate + ADP + phosphate. It functions in the pathway one-carbon metabolism; tetrahydrofolate interconversion. This chain is Formate--tetrahydrofolate ligase, found in Streptococcus uberis (strain ATCC BAA-854 / 0140J).